Consider the following 397-residue polypeptide: MSIAAIILAAGRGSRAGSLQNGPKQYRFLGREPVICHTIRCFLQHPAITNIILVIHPDDYQICANAIADLKDHLTIIEGGETRQISTLQGLRALKNVKPNYVHIHDGARPFIGNELLEQIHTSINHKEGILPVLSVSDTLKYVSNTHHVLETIPRTNLYRAQTPQCFPFELILAAHEKAMQSHKQDFTDDSAIAEWFGIPIRTIPGDPNNIKITWPADLETARSYLLKGMQIFPDIRTGNGYDVHSFEDGHYITLCGIKIPFEKKLNGHSDADVALHALTDALLATQGAGDIGTHFPPSDPQWKNASSEIFLHHAIEIIKKAEGRIANVDITLIAEKPKIGPYRHIMTENLMKILKISTDRISIKATTNEKLGFIGREEGIAALATATVIYPGEIPK.

The tract at residues 1-236 is 2-C-methyl-D-erythritol 4-phosphate cytidylyltransferase; that stretch reads MSIAAIILAA…LKGMQIFPDI (236 aa). The segment at 237-397 is 2-C-methyl-D-erythritol 2,4-cyclodiphosphate synthase; sequence RTGNGYDVHS…TVIYPGEIPK (161 aa). A divalent metal cation is bound by residues Asp-243 and His-245. 4-CDP-2-C-methyl-D-erythritol 2-phosphate contacts are provided by residues 243-245 and 269-270; these read DVH and HS. His-277 is an a divalent metal cation binding site. 4-CDP-2-C-methyl-D-erythritol 2-phosphate is bound by residues 291–293, 367–370, Phe-374, and Arg-377; these read DIG and TTNE.

It in the N-terminal section; belongs to the IspD/TarI cytidylyltransferase family. IspD subfamily. This sequence in the C-terminal section; belongs to the IspF family. A divalent metal cation is required as a cofactor.

It carries out the reaction 2-C-methyl-D-erythritol 4-phosphate + CTP + H(+) = 4-CDP-2-C-methyl-D-erythritol + diphosphate. It catalyses the reaction 4-CDP-2-C-methyl-D-erythritol 2-phosphate = 2-C-methyl-D-erythritol 2,4-cyclic diphosphate + CMP. It functions in the pathway isoprenoid biosynthesis; isopentenyl diphosphate biosynthesis via DXP pathway; isopentenyl diphosphate from 1-deoxy-D-xylulose 5-phosphate: step 2/6. It participates in isoprenoid biosynthesis; isopentenyl diphosphate biosynthesis via DXP pathway; isopentenyl diphosphate from 1-deoxy-D-xylulose 5-phosphate: step 4/6. Bifunctional enzyme that catalyzes the formation of 4-diphosphocytidyl-2-C-methyl-D-erythritol from CTP and 2-C-methyl-D-erythritol 4-phosphate (MEP) (IspD), and catalyzes the conversion of 4-diphosphocytidyl-2-C-methyl-D-erythritol 2-phosphate (CDP-ME2P) to 2-C-methyl-D-erythritol 2,4-cyclodiphosphate (ME-CPP) with a corresponding release of cytidine 5-monophosphate (CMP) (IspF). This chain is Bifunctional enzyme IspD/IspF, found in Bartonella bacilliformis (strain ATCC 35685 / KC583 / Herrer 020/F12,63).